The sequence spans 150 residues: Infection structure-specific protein 24 (150 aa).

Involved in the development of infection structures. The germ tube elongates across the leaf surface of the infected plant until it recognizes a stomate. Physical stimuli provided by the stomate induce differentiation of the germ tube to form a series of infection structures involved in host colonization. The chain is Infection structure-specific protein 24 (INF24) from Uromyces appendiculatus (Rust fungus).